A 442-amino-acid polypeptide reads, in one-letter code: Serine protease AprX (442 aa).

Positions 122 to 439 (KALLDTATEA…AGAVNAENSV (318 aa)) constitute a Peptidase S8 domain. Active-site charge relay system residues include aspartate 155 and histidine 187. The tract at residues 318-337 (DNNTASSDDDTVASFSSRGP) is disordered. Serine 384 acts as the Charge relay system in catalysis. The tract at residues 423 to 442 (EDPNIYGAGAVNAENSVPGQ) is disordered.

Belongs to the peptidase S8 family.

It localises to the cytoplasm. Is completely inhibited by phenylmethanesulphonylfluoride (PMSF) in vitro. Its function is as follows. Displays serine protease activity. Seems to have a broad substrate specificity. The polypeptide is Serine protease AprX (aprX) (Bacillus subtilis (strain 168)).